The chain runs to 195 residues: Cytochrome c oxidase assembly protein CtaG (195 aa).

Residues 1–7 (MSGGKPR) lie on the Cytoplasmic side of the membrane. Residues 8-30 (SNTRTVAMLAGVVVLMGALSWAA) traverse the membrane as a helical; Signal-anchor for type II membrane protein segment. Residues 31–195 (VPFYSWFCKV…LDAKTEPTVN (165 aa)) lie on the Periplasmic side of the membrane.

Belongs to the COX11/CtaG family.

Its subcellular location is the cell inner membrane. In terms of biological role, exerts its effect at some terminal stage of cytochrome c oxidase synthesis, probably by being involved in the insertion of the copper B into subunit I. This is Cytochrome c oxidase assembly protein CtaG from Paracoccus denitrificans (strain Pd 1222).